Consider the following 555-residue polypeptide: Phosphoglucomutase (555 aa).

2 residues coordinate alpha-D-glucose 1,6-bisphosphate: Arg-22 and Ser-114. The Phosphoserine intermediate role is filled by Ser-114. Ser-114, Asp-279, Asp-281, and Asp-283 together coordinate Mg(2+). Ser-114 is modified (phosphoserine). Alpha-D-glucose 1,6-bisphosphate is bound by residues Asp-283, Arg-284, Thr-347, Glu-366, Ser-368, and Lys-379.

It belongs to the phosphohexose mutase family. Monomer. It depends on Mg(2+) as a cofactor.

The protein resides in the cytoplasm. The catalysed reaction is alpha-D-glucose 1-phosphate = alpha-D-glucose 6-phosphate. The enzyme catalyses O-phospho-L-seryl-[protein] + alpha-D-glucose 1-phosphate = alpha-D-glucose 1,6-bisphosphate + L-seryl-[protein]. It carries out the reaction alpha-D-glucose 1,6-bisphosphate + L-seryl-[protein] = O-phospho-L-seryl-[protein] + alpha-D-glucose 6-phosphate. Catalyzes the reversible isomerization of alpha-D-glucose 1-phosphate to alpha-D-glucose 6-phosphate. The mechanism proceeds via the intermediate compound alpha-D-glucose 1,6-bisphosphate. Key enzyme in hexose metabolism. The reverse reaction is an essential step for biosynthesis because glucose 1-phosphate is the starting point for the synthesis of UDP-glucose, which acts as a precursor for the synthesis of oligosaccharides and trehalose. The chain is Phosphoglucomutase (pgmA) from Aspergillus fumigatus (strain ATCC MYA-4609 / CBS 101355 / FGSC A1100 / Af293) (Neosartorya fumigata).